The chain runs to 525 residues: Mitochondrial-processing peptidase subunit alpha (525 aa).

Residues 1–33 (MAAMVLAATRLLRGSGSWGRSRPRFGDPAYRRF) constitute a mitochondrion transit peptide. N6-succinyllysine is present on lysine 64. Lysine 299 is subject to N6-acetyllysine.

The protein belongs to the peptidase M16 family. Heterodimer of PMPCA (alpha) and PMPCB (beta) subunits, forming the mitochondrial processing protease (MPP) in which PMPCA is involved in substrate recognition and binding and PMPCB is the catalytic subunit.

It is found in the mitochondrion matrix. It localises to the mitochondrion inner membrane. Functionally, substrate recognition and binding subunit of the essential mitochondrial processing protease (MPP), which cleaves the mitochondrial sequence off newly imported precursors proteins. This is Mitochondrial-processing peptidase subunit alpha (PMPCA) from Bos taurus (Bovine).